Here is a 349-residue protein sequence, read N- to C-terminus: Protein DMR6-LIKE OXYGENASE 1 (349 aa).

A Fe2OG dioxygenase domain is found at 197–296 (HAQHMAFNYY…RLSIPTFYFP (100 aa)). Residue Tyr206 participates in 2-oxoglutarate binding. Residues His221, Asp223, and His277 each coordinate Fe cation. 2 residues coordinate 2-oxoglutarate: Arg287 and Ser289.

The protein belongs to the iron/ascorbate-dependent oxidoreductase family. The cofactor is L-ascorbate. It depends on Fe(2+) as a cofactor.

The catalysed reaction is salicylate + NADH + O2 + H(+) = 2,3-dihydroxybenzoate + NAD(+) + H2O. Its function is as follows. Converts salicylic acid (SA) to both 2,3-dihydroxybenzoic acid (2,3-DHBA) and 2,5-DHBA in vitro but only 2,3-DHBA in vivo. Component of a negative feedback regulation system of SA levels during senescence. Regulates both onset and progression of leaf senescence. Negative regulator of defense against Hyaloperonospora arabidopsidis. In terms of biological role, (Microbial infection) Confers susceptibility to the downy mildew pathogen Hyaloperonospora arabidopsidis. The chain is Protein DMR6-LIKE OXYGENASE 1 from Arabidopsis thaliana (Mouse-ear cress).